A 338-amino-acid polypeptide reads, in one-letter code: MPSQEVSVNKVIVHPLVLLSVVDHFNRMGKIGNQKRVVGVLLGCWRSKGVLDVSNSFAVPFDEDDKDKSVWFLDHDYLENMYGMFKKVNARERVVGWYHTGPKLHQNDIAINELVRRYCPNSVLVIIDAKPKDLGLPTEAYISVEEVHDDGSPTSKTFEHVPSEIGAEEAEEVGVEHLLRDIKDTTVGSLSQKITNQLMGLKGLNAQLRDIKQYLQRVGDSKMPINHQIVYQLQDIFNLLPDITNDQFTGTMYVKTNDQMLVVYLASMVRSIIALHNLINNKLANRDAEEGKSDSKEAKEKNKDSKDKDNKETKDKDGKKAEEKADKGKDEGGKGSRK.

The region spanning 11–147 is the MPN domain; that stretch reads VIVHPLVLLS…TEAYISVEEV (137 aa). The disordered stretch occupies residues 286–338; it reads RDAEEGKSDSKEAKEKNKDSKDKDNKETKDKDGKKAEEKADKGKDEGGKGSRK.

This sequence belongs to the peptidase M67A family.

Acts as a regulatory subunit of the 26S proteasome which is involved in the ATP-dependent degradation of ubiquitinated proteins. The chain is 26S proteasome non-ATPase regulatory subunit 7 (Rpn8) from Drosophila melanogaster (Fruit fly).